The sequence spans 215 residues: RWD domain-containing protein C1393.09c (215 aa).

The RWD domain occupies 7-114; the sequence is EEREILESIY…SVAKEETNAI (108 aa).

It is found in the cytoplasm. The protein resides in the nucleus. This Schizosaccharomyces pombe (strain 972 / ATCC 24843) (Fission yeast) protein is RWD domain-containing protein C1393.09c.